The chain runs to 290 residues: Phosphate import ATP-binding protein PstB (290 aa).

An ABC transporter domain is found at 25 to 285 (LEARNLDFYY…PKTRRARDYL (261 aa)). 57-64 (GPSGCGKS) lines the ATP pocket.

This sequence belongs to the ABC transporter superfamily. Phosphate importer (TC 3.A.1.7) family. In terms of assembly, the complex is composed of two ATP-binding proteins (PstB), two transmembrane proteins (PstC and PstA) and a solute-binding protein (PstS).

The protein localises to the cell inner membrane. The enzyme catalyses phosphate(out) + ATP + H2O = ADP + 2 phosphate(in) + H(+). Part of the ABC transporter complex PstSACB involved in phosphate import. Responsible for energy coupling to the transport system. This Zymomonas mobilis subsp. mobilis (strain ATCC 31821 / ZM4 / CP4) protein is Phosphate import ATP-binding protein PstB.